We begin with the raw amino-acid sequence, 349 residues long: NADH-ubiquinone oxidoreductase chain 2 (349 aa).

Transmembrane regions (helical) follow at residues 3 to 23, 66 to 86, 98 to 118, 139 to 159, 178 to 198, 199 to 219, 240 to 260, 274 to 294, and 319 to 339; these read PYVL…TFAS, AAAM…EWEI, VMLA…LPEV, FALM…TIGL, ILAY…QFAP, SLTL…FLTL, LAAL…LSGF, GLPL…YFYL, and FTMI…LLPL.

The protein belongs to the complex I subunit 2 family.

The protein resides in the mitochondrion inner membrane. It carries out the reaction a ubiquinone + NADH + 5 H(+)(in) = a ubiquinol + NAD(+) + 4 H(+)(out). Core subunit of the mitochondrial membrane respiratory chain NADH dehydrogenase (Complex I) that is believed to belong to the minimal assembly required for catalysis. Complex I functions in the transfer of electrons from NADH to the respiratory chain. The immediate electron acceptor for the enzyme is believed to be ubiquinone. In Oncorhynchus mykiss (Rainbow trout), this protein is NADH-ubiquinone oxidoreductase chain 2 (MT-ND2).